Reading from the N-terminus, the 353-residue chain is Methionine import ATP-binding protein MetN (353 aa).

An ABC transporter domain is found at Ile11–Leu251. Residue Gly48–Ser55 participates in ATP binding.

This sequence belongs to the ABC transporter superfamily. Methionine importer (TC 3.A.1.24) family. As to quaternary structure, the complex is composed of two ATP-binding proteins (MetN), two transmembrane proteins (MetI) and a solute-binding protein (MetQ).

The protein localises to the cell inner membrane. It catalyses the reaction L-methionine(out) + ATP + H2O = L-methionine(in) + ADP + phosphate + H(+). The catalysed reaction is D-methionine(out) + ATP + H2O = D-methionine(in) + ADP + phosphate + H(+). Part of the ABC transporter complex MetNIQ involved in methionine import. Responsible for energy coupling to the transport system. This chain is Methionine import ATP-binding protein MetN, found in Cereibacter sphaeroides (strain ATCC 17023 / DSM 158 / JCM 6121 / CCUG 31486 / LMG 2827 / NBRC 12203 / NCIMB 8253 / ATH 2.4.1.) (Rhodobacter sphaeroides).